The sequence spans 164 residues: Lipoprotein signal peptidase (164 aa).

3 helical membrane passes run 12-32, 70-90, and 102-122; these read WLWLVVVVLIIDLGSKYLILQ, WFFAGIAIGISVILAVMMYRL, and ALIIGGALGNLFDRLWHGFVV. Residues aspartate 123 and aspartate 141 contribute to the active site. A helical transmembrane segment spans residues 137–157; the sequence is FNLADTAICVGAALIVLEGFL.

The protein belongs to the peptidase A8 family.

The protein resides in the cell inner membrane. It catalyses the reaction Release of signal peptides from bacterial membrane prolipoproteins. Hydrolyzes -Xaa-Yaa-Zaa-|-(S,diacylglyceryl)Cys-, in which Xaa is hydrophobic (preferably Leu), and Yaa (Ala or Ser) and Zaa (Gly or Ala) have small, neutral side chains.. Its pathway is protein modification; lipoprotein biosynthesis (signal peptide cleavage). This protein specifically catalyzes the removal of signal peptides from prolipoproteins. The chain is Lipoprotein signal peptidase from Shigella boydii serotype 4 (strain Sb227).